The primary structure comprises 204 residues: Large ribosomal subunit protein uL4 (204 aa).

The disordered stretch occupies residues 53–73; the sequence is AFVSGGGKKPWRQKGRGGARA.

Belongs to the universal ribosomal protein uL4 family. In terms of assembly, part of the 50S ribosomal subunit.

Its function is as follows. One of the primary rRNA binding proteins, this protein initially binds near the 5'-end of the 23S rRNA. It is important during the early stages of 50S assembly. It makes multiple contacts with different domains of the 23S rRNA in the assembled 50S subunit and ribosome. Forms part of the polypeptide exit tunnel. The sequence is that of Large ribosomal subunit protein uL4 from Campylobacter concisus (strain 13826).